A 1169-amino-acid polypeptide reads, in one-letter code: Zinc finger protein 862 (1169 aa).

The region spanning 11-77 is the KRAB 1 domain; that stretch reads VTFDDITVYL…SVQGQRSLLE (67 aa). A TTF-type 1 zinc finger spans residues 135–218; sequence KPRSIQKSWF…RDPIWAARFR (84 aa). The KRAB 2 domain maps to 333 to 404; the sequence is VVFEDVAVYF…DPNGPKWGKG (72 aa). The TTF-type 2 zinc finger occupies 461–544; it reads RPRSIQRSWF…KEDTPHTALV (84 aa).

It is found in the nucleus. In terms of biological role, may be involved in transcriptional regulation. The chain is Zinc finger protein 862 (ZNF862) from Homo sapiens (Human).